Reading from the N-terminus, the 67-residue chain is Large ribosomal subunit protein uL29 (67 aa).

The protein belongs to the universal ribosomal protein uL29 family.

This chain is Large ribosomal subunit protein uL29, found in Methanosarcina mazei (strain ATCC BAA-159 / DSM 3647 / Goe1 / Go1 / JCM 11833 / OCM 88) (Methanosarcina frisia).